Here is a 401-residue protein sequence, read N- to C-terminus: Phosrestin-1 (401 aa).

This sequence belongs to the arrestin family. As to expression, inner and outer segments, and the inner plexiform regions of the retina.

Functionally, undergoes light-induced phosphorylation, probably plays an important role in the photoreceptor transduction. The polypeptide is Phosrestin-1 (Arr2) (Drosophila miranda (Fruit fly)).